The following is a 316-amino-acid chain: Lys-63-specific deubiquitinase BRCC36 (316 aa).

Residue A2 is modified to N-acetylalanine. The region spanning 12 to 179 (VHLESDAFLV…YTCFQSIQAQ (168 aa)) is the MPN domain. Positions 122, 124, and 135 each coordinate Zn(2+). Residues 122–135 (HSHPHITVWPSHVD) carry the JAMM motif motif. S258 is modified (phosphoserine).

The protein belongs to the peptidase M67A family. BRCC36 subfamily. In terms of assembly, component of the ARISC complex, at least composed of UIMC1/RAP80, ABRAXAS1, BRCC3/BRCC36, BABAM2 and BABAM1/NBA1. Component of the BRCA1-A complex, at least composed of BRCA1, BARD1, UIMC1/RAP80, ABRAXAS1, BRCC3/BRCC36, BABAM2 and BABAM1/NBA1. In the BRCA1-A complex, interacts directly with ABRAXAS1 and BABAM2. Component of the BRISC complex, at least composed of ABRAXAS2, BRCC3/BRCC36, BABAM2 and BABAM1/NBA1. Identified in a complex with SHMT2 and the other subunits of the BRISC complex. In the BRISC complex, interacts directly with ABRAXAS2. Identified in a complex with ABRAXAS2 and NUMA1. The BRISC complex interacts with the CSN complex. Component of the BRCA1/BRCA2 containing complex (BRCC), which also contains BRCA1, BRCA2, BARD1, BABAM2 and RAD51. BRCC is a ubiquitin E3 ligase complex that enhances cellular survival following DNA damage. Interacts with BRCA1. Binds polyubiquitin. Interacts with PWWP2B. Interacts with HDAC1; this interaction is enhanced in the presence of PWWP2B. It depends on Zn(2+) as a cofactor.

It localises to the nucleus. Its subcellular location is the cytoplasm. The protein localises to the cytoskeleton. It is found in the spindle pole. In terms of biological role, metalloprotease that specifically cleaves 'Lys-63'-linked polyubiquitin chains. Does not have activity toward 'Lys-48'-linked polyubiquitin chains. Component of the BRCA1-A complex, a complex that specifically recognizes 'Lys-63'-linked ubiquitinated histones H2A and H2AX at DNA lesions sites, leading to target the BRCA1-BARD1 heterodimer to sites of DNA damage at double-strand breaks (DSBs). In the BRCA1-A complex, it specifically removes 'Lys-63'-linked ubiquitin on histones H2A and H2AX, antagonizing the RNF8-dependent ubiquitination at double-strand breaks (DSBs). Catalytic subunit of the BRISC complex, a multiprotein complex that specifically cleaves 'Lys-63'-linked ubiquitin in various substrates. Mediates the specific 'Lys-63'-specific deubiquitination associated with the COP9 signalosome complex (CSN), via the interaction of the BRISC complex with the CSN complex. The BRISC complex is required for normal mitotic spindle assembly and microtubule attachment to kinetochores via its role in deubiquitinating NUMA1. Plays a role in interferon signaling via its role in the deubiquitination of the interferon receptor IFNAR1; deubiquitination increases IFNAR1 activity by enhancing its stability and cell surface expression. Acts as a regulator of the NLRP3 inflammasome by mediating deubiquitination of NLRP3, leading to NLRP3 inflammasome assembly. Down-regulates the response to bacterial lipopolysaccharide (LPS) via its role in IFNAR1 deubiquitination. Deubiquitinates HDAC1 and PWWP2B leading to their stabilization. The polypeptide is Lys-63-specific deubiquitinase BRCC36 (BRCC3) (Bos taurus (Bovine)).